Reading from the N-terminus, the 257-residue chain is Putative pentatricopeptide repeat-containing protein At1g43010 (257 aa).

PPR repeat units lie at residues 133–168 and 169–203; these read KMRD…GFLL and KPYL…NMEV.

This sequence belongs to the PPR family. P subfamily.

The polypeptide is Putative pentatricopeptide repeat-containing protein At1g43010 (Arabidopsis thaliana (Mouse-ear cress)).